The primary structure comprises 438 residues: Trigger factor (438 aa).

Positions 160–245 (DDKVTIDFVG…VKKIQQAELP (86 aa)) constitute a PPIase FKBP-type domain.

Belongs to the FKBP-type PPIase family. Tig subfamily.

The protein resides in the cytoplasm. It catalyses the reaction [protein]-peptidylproline (omega=180) = [protein]-peptidylproline (omega=0). Its function is as follows. Involved in protein export. Acts as a chaperone by maintaining the newly synthesized protein in an open conformation. Functions as a peptidyl-prolyl cis-trans isomerase. This chain is Trigger factor, found in Francisella tularensis subsp. holarctica (strain LVS).